The following is a 222-amino-acid chain: UPF0173 metal-dependent hydrolase Nther_2337 (222 aa).

It belongs to the UPF0173 family.

The protein is UPF0173 metal-dependent hydrolase Nther_2337 of Natranaerobius thermophilus (strain ATCC BAA-1301 / DSM 18059 / JW/NM-WN-LF).